A 341-amino-acid polypeptide reads, in one-letter code: Anthranilate phosphoribosyltransferase (341 aa).

5-phospho-alpha-D-ribose 1-diphosphate is bound by residues Gly-79, 82–83 (GD), Thr-87, 89–92 (NIST), 107–115 (KHGNRSISS), and Ser-119. An anthranilate-binding site is contributed by Gly-79. Ser-91 provides a ligand contact to Mg(2+). Asn-110 contacts anthranilate. Arg-164 contacts anthranilate. Residues Asp-222 and Glu-223 each coordinate Mg(2+).

The protein belongs to the anthranilate phosphoribosyltransferase family. Homodimer. It depends on Mg(2+) as a cofactor.

It carries out the reaction N-(5-phospho-beta-D-ribosyl)anthranilate + diphosphate = 5-phospho-alpha-D-ribose 1-diphosphate + anthranilate. It participates in amino-acid biosynthesis; L-tryptophan biosynthesis; L-tryptophan from chorismate: step 2/5. Functionally, catalyzes the transfer of the phosphoribosyl group of 5-phosphorylribose-1-pyrophosphate (PRPP) to anthranilate to yield N-(5'-phosphoribosyl)-anthranilate (PRA). This Blochmanniella pennsylvanica (strain BPEN) protein is Anthranilate phosphoribosyltransferase.